The chain runs to 1894 residues: Plexin-A2 (1894 aa).

A signal peptide spans Met-1–Gly-34. 2 N-linked (GlcNAc...) asparagine glycosylation sites follow: Asn-15 and Asn-76. One can recognise a Sema domain in the interval Met-35–Val-508. Residues Met-35–Pro-1237 are Extracellular-facing. Disulfide bonds link Cys-94-Cys-103 and Cys-129-Cys-137. N-linked (GlcNAc...) asparagine glycans are attached at residues Asn-163 and Asn-327. 8 disulfide bridges follow: Cys-284–Cys-405, Cys-300–Cys-356, Cys-374–Cys-393, Cys-511–Cys-528, Cys-517–Cys-559, Cys-520–Cys-537, Cys-531–Cys-543, and Cys-594–Cys-613. 3 N-linked (GlcNAc...) asparagine glycosylation sites follow: Asn-598, Asn-696, and Asn-756. 4 IPT/TIG domains span residues Pro-858–Phe-951, Pro-954–Tyr-1037, Pro-1041–Tyr-1139, and Pro-1143–Val-1228. 2 N-linked (GlcNAc...) asparagine glycosylation sites follow: Asn-1180 and Asn-1205. Residues Ala-1238–Ile-1258 form a helical membrane-spanning segment. The Cytoplasmic segment spans residues Ala-1259–Ser-1894. A coiled-coil region spans residues Lys-1261–Ser-1310. Phosphoserine is present on Ser-1612.

The protein belongs to the plexin family. As to quaternary structure, homodimer. Interacts with RND1. Interacts directly with NRP1 and NRP2. The PLXNA2 homodimer interacts with a SEMA6A homodimer, giving rise to a heterotetramer.

It localises to the cell membrane. Its function is as follows. Coreceptor for SEMA3A and SEMA6A. Necessary for signaling by SEMA6A and class 3 semaphorins and subsequent remodeling of the cytoskeleton. Plays a role in axon guidance, invasive growth and cell migration. Class 3 semaphorins bind to a complex composed of a neuropilin and a plexin. The plexin modulates the affinity of the complex for specific semaphorins, and its cytoplasmic domain is required for the activation of down-stream signaling events in the cytoplasm. The sequence is that of Plexin-A2 (Plxna2) from Mus musculus (Mouse).